The sequence spans 524 residues: Probable 1,3-beta-glucanosyltransferase GAS3 (524 aa).

An N-terminal signal peptide occupies residues 1 to 21 (MQLSKSILLAALAATPSLVNA). The cysteines at positions 78 and 107 are disulfide-linked. (1,3-beta-D-glucosyl)n-binding residues include Tyr-96, Asn-168, and Glu-169. The active-site Proton donor is Glu-169. A glycan (N-linked (GlcNAc...) asparagine) is linked at Asn-201. Asp-212 and Arg-217 together coordinate (1,3-beta-D-glucosyl)n. 2 disulfide bridges follow: Cys-226-Cys-369 and Cys-254-Cys-286. Residue Asn-269 is glycosylated (N-linked (GlcNAc...) asparagine). The active-site Nucleophile is the Glu-283. Tyr-315 serves as a coordination point for (1,3-beta-D-glucosyl)n. Residues Asn-350, Asn-385, Asn-404, and Asn-422 are each glycosylated (N-linked (GlcNAc...) asparagine). The tract at residues 461–498 (TSQSSSRSLTSSTSPSSSTGSSSSTGSSSASSSSKSKG) is disordered. Gly-498 carries GPI-anchor amidated glycine lipidation. Residues 499–524 (VGNIVNVSFSQSGYLALFAGLISALL) constitute a propeptide, removed in mature form.

It belongs to the glycosyl hydrolase 72 family. Post-translationally, the GPI-anchor is attached to the protein in the endoplasmic reticulum and serves to target the protein to the cell surface. There, the glucosamine-inositol phospholipid moiety is cleaved off and the GPI-modified mannoprotein is covalently attached via its lipidless GPI glycan remnant to the 1,6-beta-glucan of the outer cell wall layer. In terms of processing, N-glycosylated.

It is found in the secreted. The protein resides in the cell wall. The protein localises to the membrane. Its function is as follows. Splits internally a 1,3-beta-glucan molecule and transfers the newly generated reducing end (the donor) to the non-reducing end of another 1,3-beta-glucan molecule (the acceptor) forming a 1,3-beta linkage, resulting in the elongation of 1,3-beta-glucan chains in the cell wall. Involved in cell wall biosynthesis and morphogenesis. The sequence is that of Probable 1,3-beta-glucanosyltransferase GAS3 (GAS3) from Saccharomyces cerevisiae (strain ATCC 204508 / S288c) (Baker's yeast).